The primary structure comprises 487 residues: Chromosomal replication initiator protein DnaA (487 aa).

Positions 1–92 (MTIKGGVVSQ…SELWTANDAT (92 aa)) are domain I, interacts with DnaA modulators. A domain II region spans residues 92 to 144 (TGRRLDLKSRLEFESVGGAGYEAKAEPIEIVLPVSSDVPALAPTNGSKPSPVQ). Residues 145–367 (GLQERFTFDT…GALNTLSARA (223 aa)) are domain III, AAA+ region. Residues Gly-189, Gly-191, Lys-192, and Thr-193 each contribute to the ATP site. The domain IV, binds dsDNA stretch occupies residues 368 to 487 (GEGVSRLTLE…LETITRKLRG (120 aa)).

The protein belongs to the DnaA family. In terms of assembly, oligomerizes as a right-handed, spiral filament on DNA at oriC.

The protein localises to the cytoplasm. Functionally, plays an essential role in the initiation and regulation of chromosomal replication. ATP-DnaA binds to the origin of replication (oriC) to initiate formation of the DNA replication initiation complex once per cell cycle. Binds the DnaA box (a 9 base pair repeat at the origin) and separates the double-stranded (ds)DNA. Forms a right-handed helical filament on oriC DNA; dsDNA binds to the exterior of the filament while single-stranded (ss)DNA is stabiized in the filament's interior. The ATP-DnaA-oriC complex binds and stabilizes one strand of the AT-rich DNA unwinding element (DUE), permitting loading of DNA polymerase. After initiation quickly degrades to an ADP-DnaA complex that is not apt for DNA replication. Binds acidic phospholipids. This Caulobacter sp. (strain K31) protein is Chromosomal replication initiator protein DnaA.